Here is a 76-residue protein sequence, read N- to C-terminus: DNA-directed RNA polymerase subunit omega (76 aa).

It belongs to the RNA polymerase subunit omega family. In terms of assembly, the RNAP catalytic core consists of 2 alpha, 1 beta, 1 beta' and 1 omega subunit. When a sigma factor is associated with the core the holoenzyme is formed, which can initiate transcription.

It catalyses the reaction RNA(n) + a ribonucleoside 5'-triphosphate = RNA(n+1) + diphosphate. Functionally, promotes RNA polymerase assembly. Latches the N- and C-terminal regions of the beta' subunit thereby facilitating its interaction with the beta and alpha subunits. In Aquifex aeolicus (strain VF5), this protein is DNA-directed RNA polymerase subunit omega (rpoZ).